The following is a 1028-amino-acid chain: Pentatricopeptide repeat-containing protein At3g09040, mitochondrial (1028 aa).

The N-terminal 30 residues, 1–30 (MYFRVLLTPSSAMFDSFSFVRRLSYSPDLG), are a transit peptide targeting the mitochondrion. PPR repeat units lie at residues 94–123 (EGRLGNAIVDLYAKCAQVSYAEKQFDFLEK), 124–158 (DVTAWNSMLSMYSSIGKPGKVLRSFVSLFENQIFP), 159–193 (NKFTFSIVLSTCARETNVEFGRQIHCSMIKMGLER), 194–224 (NSYCGGALVDMYAKCDRISDARRVFEWIVDP), 225–259 (NTVCWTCLFSGYVKAGLPEEAVLVFERMRDEGHRP), 260–290 (DHLAFVTVINTYIRLGKLKDARLLFGEMSSP), 291–325 (DVVAWNVMISGHGKRGCETVAIEYFFNMRKSSVKS), 326–360 (TRSTLGSVLSAIGIVANLDLGLVVHAEAIKLGLAS), 361–391 (NIYVGSSLVSMYSKCEKMEAAAKVFEALEEK), 392–426 (NDVFWNAMIRGYAHNGESHKVMELFMDMKSSGYNI), 427–461 (DDFTFTSLLSTCAASHDLEMGSQFHSIIIKKKLAK), 462–492 (NLFVGNALVDMYAKCGALEDARQIFERMCDR), 493–527 (DNVTWNTIIGSYVQDENESEAFDLFKRMNLCGIVS), 528–562 (DGACLASTLKACTHVHGLYQGKQVHCLSVKCGLDR), 563–593 (DLHTGSSLIDMYSKCGIIKDARKVFSSLPEW), 594–627 (SVVSMNALIAGYSQNNLEEAVVLFQEMLTRGVNP), 628–662 (SEITFATIVEACHKPESLTLGTQFHGQITKRGFSS), 664–694 (GEYLGISLLGMYMNSRGMTEACALFSELSSP), 696–730 (SIVLWTGMMSGHSQNGFYEEALKFYKEMRHDGVLP), 731–765 (DQATFVTVLRVCSVLSSLREGRAIHSLIFHLAHDL), 766–796 (DELTSNTLIDMYAKCGDMKGSSQVFDEMRRR), 798–832 (NVVSWNSLINGYAKNGYAEDALKIFDSMRQSHIMP), 833–863 (DEITFLGVLTACSHAGKVSDGRKIFEMMIGQ), and 869–899 (RVDHVACMVDLLGRWGYLQEADDFIEAQNLK). Residues 904–979 (LWSSLLGACR…VPGYSWIDVE (76 aa)) form a type E motif region. Positions 980-1010 (QRTHIFAAGDKSHSEIGKIEMFLEDLYDLMK) are type E(+) motif.

This sequence belongs to the PPR family. PCMP-E subfamily.

Its subcellular location is the mitochondrion. This Arabidopsis thaliana (Mouse-ear cress) protein is Pentatricopeptide repeat-containing protein At3g09040, mitochondrial (PCMP-E88).